The following is a 979-amino-acid chain: Receptor-type tyrosine-protein phosphatase-like N (979 aa).

Residues methionine 1–alanine 34 form the signal peptide. The segment at isoleucine 35–proline 131 is RESP18 homology domain. At isoleucine 35–arginine 575 the chain is on the lumenal side. Cysteines 53 and 62 form a disulfide. Positions isoleucine 113–serine 127 are enriched in basic and acidic residues. Disordered stretches follow at residues isoleucine 113–serine 171, glycine 248–leucine 272, serine 285–aspartate 332, and glutamate 391–proline 466. Phosphoserine is present on residues serine 308 and serine 309. Residues glutamate 400 to proline 409 show a composition bias toward pro residues. Residues serine 449 to arginine 575 form a sufficient for dimerization of proICA512 region. Residues leucine 451–proline 466 show a composition bias toward polar residues. N-linked (GlcNAc...) asparagine glycans are attached at residues asparagine 506 and asparagine 524. A helical membrane pass occupies residues serine 576–valine 600. The segment at arginine 601–glutamate 732 is sufficient for dimerization of proICA512. Residues arginine 601–glutamine 979 lie on the Cytoplasmic side of the membrane. The tract at residues asparagine 643 to glutamate 680 is disordered. A compositionally biased stretch (low complexity) spans serine 652–serine 677. The 261-residue stretch at leucine 709–glutamate 969 folds into the Tyrosine-protein phosphatase domain. A Glycyl lysine isopeptide (Lys-Gly) (interchain with G-Cter in SUMO) cross-link involves residue lysine 754.

It belongs to the protein-tyrosine phosphatase family. Receptor class 8 subfamily. In terms of assembly, homodimer; shown for the unprocessed protein (proICA512) in the endoplasmic reticulum and resolved during protein maturation as ICA512-TMF seems to be predominantly monomeric in secretory granules; however, ICA512-CCF interacts with ICA512-TMF disrupting the ICA512-TMF:SNTB2 complex. The isolated lumenal RESP18 homology domain has been shown to form disulfide-linked homooligomers. Interacts (via cytoplasmic domain) with phosphorylated SNTB2; this protects PTPRN against cleavage by CAPN1 to produce ICA512-CCF. Dephosphorylation of SNTB2 upon insulin stimulation disrupts the interaction and results in PTPRN cleavage. Interacts with SNX19. ICA512-CCF interacts with PIAS4; in the nucleus. Interacts with STAT5B (phosphorylated); down-regulated by ICA512-CCF sumoylation; ICA512-CCF prevents STAT5B dephosphorylation; ICA512-CCF mediates interaction of STAT5B with PIAS4. Interacts (via RESP18 homology domain) with insulin and proinsulin. Interacts with PTPRN2, PTPRA and PTPRE. In terms of processing, N-glycosylated. Post-translationally, O-glycosylated. Subject to proteolytic cleavage at multiple sites. Subject to cleavage on a pair of basic residues. On exocytosis of secretory granules in pancreatic beta-cells ICA512-TMF is transiently inserted in the plasma-membrane and cleaved by mu-type calpain CPN1 to yield ICA512-CCF. In terms of processing, sumoylated at two sites including Lys-754. Sumoylation decreases interaction with STAT5. As to expression, detected in pituitary (at protein level).

It is found in the membrane. It localises to the cytoplasmic vesicle. Its subcellular location is the secretory vesicle membrane. The protein resides in the perikaryon. The protein localises to the cell projection. It is found in the axon. It localises to the synapse. Its subcellular location is the cell membrane. The protein resides in the endosome. The protein localises to the nucleus. In terms of biological role, plays a role in vesicle-mediated secretory processes. Required for normal accumulation of secretory vesicles in hippocampus, pituitary and pancreatic islets. Required for the accumulation of normal levels of insulin-containing vesicles and preventing their degradation. Plays a role in insulin secretion in response to glucose stimuli. Required for normal accumulation of the neurotransmitters norepinephrine, dopamine and serotonin in the brain. In females, but not in males, required for normal accumulation and secretion of pituitary hormones, such as luteinizing hormone (LH) and follicle-stimulating hormone (FSH). Required to maintain normal levels of renin expression and renin release. Seems to lack intrinsic enzyme activity. May regulate catalytic active protein-tyrosine phosphatases such as PTPRA through dimerization. ICA512-TMF regulates dynamics and exocytosis of insulin secretory granules (SGs); binding of ICA512-TMF to SNTB2/beta-2-syntrophin is proposed to restrain SGs mobility and exocytosis by tethering them to the actin cytoskeleton depending on UTRN; the function is inhibited by cytoplasmic ICA512-CFF dimerizing with ICA512-TMF and displacing SNTB2. Functionally, ICA512-CCF translocated to the nucleus promotes expression of insulin and other granule-related genes; the function implicates binding to and regulating activity of STAT5B probably by preventing its dephosphorylation and potentially by inducing its sumoylation by recruiting PIAS4. Enhances pancreatic beta-cell proliferation by converging with signaling by STAT5B and STAT3. ICA512-CCF located in the cytoplasm regulates dynamics and exocytosis of insulin secretory granules (SGs) by dimerizing with ICA512-TMF and displacing SNTB2 thus enhancing SGs mobility and exocytosis. This Bos taurus (Bovine) protein is Receptor-type tyrosine-protein phosphatase-like N (PTPRN).